Reading from the N-terminus, the 133-residue chain is ATP synthase epsilon chain (133 aa).

This sequence belongs to the ATPase epsilon chain family. In terms of assembly, F-type ATPases have 2 components, CF(1) - the catalytic core - and CF(0) - the membrane proton channel. CF(1) has five subunits: alpha(3), beta(3), gamma(1), delta(1), epsilon(1). CF(0) has three main subunits: a, b and c.

The protein resides in the cell membrane. Produces ATP from ADP in the presence of a proton gradient across the membrane. The protein is ATP synthase epsilon chain of Staphylococcus haemolyticus (strain JCSC1435).